The following is a 444-amino-acid chain: Glutamyl-tRNA reductase (444 aa).

Residues 49–52 (TCNR), S109, 114–116 (ETQ), and Q120 contribute to the substrate site. The Nucleophile role is filled by C50. 189–194 (GAGKMG) contributes to the NADP(+) binding site.

Belongs to the glutamyl-tRNA reductase family. In terms of assembly, homodimer.

It catalyses the reaction (S)-4-amino-5-oxopentanoate + tRNA(Glu) + NADP(+) = L-glutamyl-tRNA(Glu) + NADPH + H(+). It functions in the pathway porphyrin-containing compound metabolism; protoporphyrin-IX biosynthesis; 5-aminolevulinate from L-glutamyl-tRNA(Glu): step 1/2. Functionally, catalyzes the NADPH-dependent reduction of glutamyl-tRNA(Glu) to glutamate 1-semialdehyde (GSA). This is Glutamyl-tRNA reductase from Bacillus cereus (strain AH187).